Consider the following 555-residue polypeptide: B3 domain-containing protein REM10 (555 aa).

4 consecutive DNA-binding regions (TF-B3) follow at residues 11–103 (NPQF…LGPS), 150–247 (CFVA…FPMT), 276–372 (SFVA…LPLN), and 460–554 (SQNR…FCSK).

Its subcellular location is the nucleus. The polypeptide is B3 domain-containing protein REM10 (REM10) (Arabidopsis thaliana (Mouse-ear cress)).